The following is a 144-amino-acid chain: Large-conductance mechanosensitive channel (144 aa).

2 consecutive transmembrane segments (helical) span residues 14 to 34 and 81 to 101; these read VLDMAVGIIIGAAFGKIVTSF and GTFLNVVLDFVIVAFSIFLII.

This sequence belongs to the MscL family. Homopentamer.

It localises to the cell inner membrane. In terms of biological role, channel that opens in response to stretch forces in the membrane lipid bilayer. May participate in the regulation of osmotic pressure changes within the cell. The chain is Large-conductance mechanosensitive channel from Bdellovibrio bacteriovorus (strain ATCC 15356 / DSM 50701 / NCIMB 9529 / HD100).